A 758-amino-acid polypeptide reads, in one-letter code: MTTLHFSGFPRVGAFRELKFAQEKYWRKEISEQELLAVAKDLREKNWKHQAAANADYVAVGDFTFYDHILDLQVATGAIPARFGFDSQNLSLEQFFQLARGNKDQFAIEMTKWFDTNYHYLVPEFHADTEFKANAKHYVQQLQEAQALGLKAKPTVVGPLTFLWVGKEKGAVEFDRLSLLPKLLPVYVEILTALVEAGAEWIQIDEPALTVDLPKEWVEAYKDVYATLSKVSAKILLSTYFGSVAEHAALLKSLPVDGLHIDLVRAPEQLDAFADYDKVLSAGVIDGRNIWRANLNKVLETVELLQAKLGDRLWISSSCSLLHTPFDLSVEEKLKANKPDLYSWLAFTLQKTQELRVLKAALNEGRDSVAEELAASQAAADSRANSSEIHRADVAKRLADLPANADQRKSPFADRIKAQQAWLNLPLLPTTNIGSFPQTTEIRQARAAFKKGELSAADYEAAMKKEIALVVEEQEKLDLDVLVHGEAERNDMVEYFGELLSGFAFTQYGWVQSYGSRCVKPPIIFGDVSRPEAMTVAWSTYAQSLTKRPMKGMLTGPVTILQWSFVRNDIPRSTVCKQIALALNDEVLDLEKAGIKVIQIDEPAIREGLPLKRADWDAYLNWAGESFRLSSTGCEDSTQIHTHMCYSEFNDILPAIAAMDADVITIETSRSDMELLTAFGEFKYPNDIGPGVYDIHSPRVPTEAEVEHLLRKAIEVVPVERLWVNPDCGLKTRGWKETLEQLQVMMNVTHKLRAELAK.

Residues 16–19 and K112 each bind 5-methyltetrahydropteroyltri-L-glutamate; that span reads RELK. L-homocysteine contacts are provided by residues 433-435 and E486; that span reads IGS. L-methionine is bound by residues 433–435 and E486; that span reads IGS. 5-methyltetrahydropteroyltri-L-glutamate is bound by residues 517–518 and W563; that span reads RC. D601 serves as a coordination point for L-homocysteine. D601 is a binding site for L-methionine. E607 provides a ligand contact to 5-methyltetrahydropteroyltri-L-glutamate. Zn(2+) is bound by residues H643, C645, and E667. H696 (proton donor) is an active-site residue. Zn(2+) is bound at residue C728.

It belongs to the vitamin-B12 independent methionine synthase family. Requires Zn(2+) as cofactor.

It catalyses the reaction 5-methyltetrahydropteroyltri-L-glutamate + L-homocysteine = tetrahydropteroyltri-L-glutamate + L-methionine. It participates in amino-acid biosynthesis; L-methionine biosynthesis via de novo pathway; L-methionine from L-homocysteine (MetE route): step 1/1. Its function is as follows. Catalyzes the transfer of a methyl group from 5-methyltetrahydrofolate to homocysteine resulting in methionine formation. The polypeptide is 5-methyltetrahydropteroyltriglutamate--homocysteine methyltransferase (Neisseria meningitidis serogroup A / serotype 4A (strain DSM 15465 / Z2491)).